A 63-amino-acid chain; its full sequence is Large ribosomal subunit protein uL29 (63 aa).

The protein belongs to the universal ribosomal protein uL29 family.

The protein is Large ribosomal subunit protein uL29 of Proteus mirabilis (strain HI4320).